Consider the following 728-residue polypeptide: Catalase B (728 aa).

An N-terminal signal peptide occupies residues 1–15 (MRLTFIPSLIGVANA). A propeptide spanning residues 16-27 (VCPYMTGELNRR) is cleaved from the precursor. The active site involves His-102. Residue Asn-120 is glycosylated (N-linked (GlcNAc...) asparagine). Asn-175 is a catalytic residue. Tyr-389 contacts heme. Residues Asn-448 and Asn-551 are each glycosylated (N-linked (GlcNAc...) asparagine).

It belongs to the catalase family. As to quaternary structure, homotetramer. Heme serves as cofactor. In terms of processing, N-glycosylated.

The protein resides in the secreted. It carries out the reaction 2 H2O2 = O2 + 2 H2O. Its function is as follows. Occurs in almost all aerobically respiring organisms and serves to protect cells from the toxic effects of hydrogen peroxide. This chain is Catalase B (catB), found in Aspergillus fumigatus (strain ATCC MYA-4609 / CBS 101355 / FGSC A1100 / Af293) (Neosartorya fumigata).